The chain runs to 360 residues: 3-dehydroquinate synthase (360 aa).

NAD(+) is bound by residues Asp71–Lys76, Gly105–Asp109, Thr129–Thr130, Lys142, Lys151, and Cys169–Thr172. Zn(2+) is bound by residues Glu184, His247, and His264.

This sequence belongs to the sugar phosphate cyclases superfamily. Dehydroquinate synthase family. The cofactor is Co(2+). It depends on Zn(2+) as a cofactor. NAD(+) serves as cofactor.

It is found in the cytoplasm. It catalyses the reaction 7-phospho-2-dehydro-3-deoxy-D-arabino-heptonate = 3-dehydroquinate + phosphate. It functions in the pathway metabolic intermediate biosynthesis; chorismate biosynthesis; chorismate from D-erythrose 4-phosphate and phosphoenolpyruvate: step 2/7. In terms of biological role, catalyzes the conversion of 3-deoxy-D-arabino-heptulosonate 7-phosphate (DAHP) to dehydroquinate (DHQ). In Erwinia tasmaniensis (strain DSM 17950 / CFBP 7177 / CIP 109463 / NCPPB 4357 / Et1/99), this protein is 3-dehydroquinate synthase.